Here is a 397-residue protein sequence, read N- to C-terminus: Tryptophan synthase beta chain (397 aa).

Lys-87 is modified (N6-(pyridoxal phosphate)lysine).

Belongs to the TrpB family. In terms of assembly, tetramer of two alpha and two beta chains. Pyridoxal 5'-phosphate serves as cofactor.

It catalyses the reaction (1S,2R)-1-C-(indol-3-yl)glycerol 3-phosphate + L-serine = D-glyceraldehyde 3-phosphate + L-tryptophan + H2O. It functions in the pathway amino-acid biosynthesis; L-tryptophan biosynthesis; L-tryptophan from chorismate: step 5/5. In terms of biological role, the beta subunit is responsible for the synthesis of L-tryptophan from indole and L-serine. This Citrobacter koseri (strain ATCC BAA-895 / CDC 4225-83 / SGSC4696) protein is Tryptophan synthase beta chain.